The primary structure comprises 438 residues: MDYQTIPSQGLSGEICVPGDKSISHRAVLLAAIAEGQTQVDGFLMGADNLAMVSALQQMGASIQVIEDENILVVEGVGMTGLQAPSEALDCGNSGTAIRLLSGLLAGQPFNTVLTGDSSLQRRPMKRIIDPLTLMGAKIDSTGNVPPLKIYGNPRLTGIHYQLPMASAQVKSCLLLAGLYARGKTCITEPAPSRDHTERLLKHFHYTLQKDKQSICVSGGGKLKANDISIPGDISSAAFFIVAATITPGSAIRLCRVGVNPTRLGVINLLKMMGADIEVTHYTEKNEEPTADITVRHARLKGIDIPPDQVPLTIDEFPVLLIAAAVAQGKTVLRDGAELRVKETDRIAAMVDGLQKLGIAAESLPDGVIIQGGTLEGGEVNSYDDHRIAMAFAVAGTLAKGPVRIRNCDNVKTSFPNFVELANEVGMNVKGVRGRGGF.

Lysine 21, serine 22, and arginine 26 together coordinate 3-phosphoshikimate. Lysine 21 contacts phosphoenolpyruvate. Residues glycine 95 and arginine 123 each contribute to the phosphoenolpyruvate site. 3-phosphoshikimate contacts are provided by serine 167, glutamine 169, aspartate 315, and lysine 342. Glutamine 169 serves as a coordination point for phosphoenolpyruvate. Aspartate 315 functions as the Proton acceptor in the catalytic mechanism. Phosphoenolpyruvate is bound by residues arginine 346 and arginine 387.

It belongs to the EPSP synthase family. In terms of assembly, monomer.

It localises to the cytoplasm. It catalyses the reaction 3-phosphoshikimate + phosphoenolpyruvate = 5-O-(1-carboxyvinyl)-3-phosphoshikimate + phosphate. Its pathway is metabolic intermediate biosynthesis; chorismate biosynthesis; chorismate from D-erythrose 4-phosphate and phosphoenolpyruvate: step 6/7. Functionally, catalyzes the transfer of the enolpyruvyl moiety of phosphoenolpyruvate (PEP) to the 5-hydroxyl of shikimate-3-phosphate (S3P) to produce enolpyruvyl shikimate-3-phosphate and inorganic phosphate. In Coxiella burnetii (strain CbuG_Q212) (Coxiella burnetii (strain Q212)), this protein is 3-phosphoshikimate 1-carboxyvinyltransferase.